A 142-amino-acid polypeptide reads, in one-letter code: Large ribosomal subunit protein uL13 (142 aa).

The protein belongs to the universal ribosomal protein uL13 family. As to quaternary structure, part of the 50S ribosomal subunit.

Functionally, this protein is one of the early assembly proteins of the 50S ribosomal subunit, although it is not seen to bind rRNA by itself. It is important during the early stages of 50S assembly. This is Large ribosomal subunit protein uL13 from Vibrio parahaemolyticus serotype O3:K6 (strain RIMD 2210633).